The chain runs to 150 residues: Heavy metal-associated isoprenylated plant protein 24 (150 aa).

Positions 26–89 (QTVALRVARI…AAKSTKKKVE (64 aa)) constitute an HMA domain. A metal cation-binding residues include C37 and C40. C147 bears the Cysteine methyl ester mark. The S-farnesyl cysteine moiety is linked to residue C147. The propeptide at 148-150 (AIM) is removed in mature form.

The protein belongs to the HIPP family. As to quaternary structure, interacts with ZHD11/HB29.

Its function is as follows. Heavy-metal-binding protein. The sequence is that of Heavy metal-associated isoprenylated plant protein 24 from Arabidopsis thaliana (Mouse-ear cress).